Consider the following 217-residue polypeptide: Ras-related protein RABA5b (217 aa).

19–26 (GDSAVGKS) contacts GTP. The Effector region signature appears at 41-49 (SKATIGVEF). Residues 67–71 (DTAGQ), 125–128 (NKCD), and 155–156 (SA) contribute to the GTP site. Residues Cys-214 and Cys-215 are each lipidated (S-geranylgeranyl cysteine).

Belongs to the small GTPase superfamily. Rab family.

The protein localises to the cell membrane. Intracellular vesicle trafficking and protein transport. The chain is Ras-related protein RABA5b (RABA5B) from Arabidopsis thaliana (Mouse-ear cress).